A 662-amino-acid chain; its full sequence is Primary amine oxidase 2 (662 aa).

A signal peptide spans 1–22; it reads MSQLLLFTILVFSSVFVIGSLS. N-linked (GlcNAc...) asparagine glycosylation occurs at N154. Position 321-332 (321-332) interacts with substrate; that stretch reads FFDCGEFGCGQY. D323 serves as the catalytic Proton acceptor. The cysteines at positions 342 and 368 are disulfide-linked. 405–410 contacts substrate; sequence VGNYDY. Y408 functions as the Schiff-base intermediate with substrate; via topaquinone in the catalytic mechanism. Y408 is modified (2',4',5'-topaquinone). 2 residues coordinate Cu cation: H464 and H466. Residues D473 and D475 each contribute to the Mn(2+) site. N-linked (GlcNAc...) asparagine glycosylation occurs at N568. The Mn(2+) site is built by D602 and I603. H613 contributes to the Cu cation binding site.

The protein belongs to the copper/topaquinone oxidase family. Homodimer. Cu cation is required as a cofactor. The cofactor is Mn(2+). It depends on L-topaquinone as a cofactor. Topaquinone (TPQ) is generated by copper-dependent autoxidation of a specific tyrosyl residue.

It carries out the reaction a primary methyl amine + O2 + H2O = an aldehyde + H2O2 + NH4(+). This is Primary amine oxidase 2 from Arabidopsis thaliana (Mouse-ear cress).